The chain runs to 241 residues: 1-Cys peroxiredoxin (241 aa).

The region spanning 33–189 (LRIGDVVPDF…IIRILDSFQL (157 aa)) is the Thioredoxin domain. Residue cysteine 75 is the Cysteine sulfenic acid (-SOH) intermediate of the active site.

Belongs to the peroxiredoxin family. Prx6 subfamily. Homodimer.

It catalyses the reaction a hydroperoxide + [thioredoxin]-dithiol = an alcohol + [thioredoxin]-disulfide + H2O. In terms of biological role, thiol-specific peroxidase that catalyzes the reduction of hydrogen peroxide and organic hydroperoxides to water and alcohols, respectively. Plays a role in cell protection against oxidative stress by detoxifying peroxides. The polypeptide is 1-Cys peroxiredoxin (Dictyostelium discoideum (Social amoeba)).